The following is a 359-amino-acid chain: Serine/threonine-protein kinase SAPK7 (359 aa).

In terms of domain architecture, Protein kinase spans 4-260 (YELLKDIGAG…IREIRNHPWF (257 aa)). ATP is bound by residues 10–18 (IGAGNFGVA) and lysine 33. Catalysis depends on aspartate 123, which acts as the Proton acceptor. A disordered region spans residues 299–359 (EEARTPPRSS…VHASGEFQLS (61 aa)). The segment covering 331-343 (EEQEEEEDAEDEY) has biased composition (acidic residues).

This sequence belongs to the protein kinase superfamily. Ser/Thr protein kinase family. In terms of processing, may be phosphorylated. As to expression, weakly expressed in roots. Expressed in roots of young seedlings.

It is found in the cytoplasm. The protein localises to the nucleus. The enzyme catalyses L-seryl-[protein] + ATP = O-phospho-L-seryl-[protein] + ADP + H(+). It catalyses the reaction L-threonyl-[protein] + ATP = O-phospho-L-threonyl-[protein] + ADP + H(+). Activated by hyperosmotic stress. May play a role in signal transduction of hyperosmotic response. This Oryza sativa subsp. japonica (Rice) protein is Serine/threonine-protein kinase SAPK7 (SAPK7).